The primary structure comprises 61 residues: Beta-defensin 13 (61 aa).

The N-terminal stretch at methionine 1 to alanine 21 is a signal peptide. A 1,2-diacyl-sn-glycero-3-phosphate-binding residues include serine 24, arginine 40, histidine 44, asparagine 51, asparagine 53, glycine 54, histidine 58, and lysine 61. Cystine bridges form between cysteine 31–cysteine 59, cysteine 38–cysteine 52, and cysteine 42–cysteine 60.

The protein belongs to the beta-defensin family. In terms of assembly, monomeric. Forms multimeric, probably including tetrameric, complexes in the presence of phospholipid phosphatidic acid.

It is found in the secreted. Its function is as follows. Exhibits antimicrobial activity against fungi. Antimicrobial activity in a pH-dependent manner against the yeast C.albicans; activity is salt tolerant and retains antifungal activity in NaCl concentrations of 100mM. Permeabilizes C.albicans cell membranes via targeting plasma membrane phospholipid phosphatidic acid. This chain is Beta-defensin 13, found in Crocodylus porosus (Saltwater crocodile).